The sequence spans 77 residues: U11-lycotoxin-Ls1a (77 aa).

The signal sequence occupies residues Met-1–Ala-20. Positions Glu-21–Arg-26 are excised as a propeptide.

The protein belongs to the neurotoxin 19 (CSTX) family. 10 (U11-Lctx) subfamily. Contains 4 disulfide bonds. In terms of tissue distribution, expressed by the venom gland.

It is found in the secreted. The chain is U11-lycotoxin-Ls1a from Lycosa singoriensis (Wolf spider).